Reading from the N-terminus, the 210-residue chain is Putative tyrosine-protein phosphatase OCA1 (210 aa).

A Tyrosine-protein phosphatase domain is found at 44 to 204 (NFCPVERYLY…EIDREKAPNW (161 aa)). Cysteine 140 (phosphocysteine intermediate) is an active-site residue.

It belongs to the protein-tyrosine phosphatase family.

It is found in the cytoplasm. It catalyses the reaction O-phospho-L-tyrosyl-[protein] + H2O = L-tyrosyl-[protein] + phosphate. In terms of biological role, putative tyrosine-protein phosphatase required for protection against superoxide stress. In Kluyveromyces lactis (strain ATCC 8585 / CBS 2359 / DSM 70799 / NBRC 1267 / NRRL Y-1140 / WM37) (Yeast), this protein is Putative tyrosine-protein phosphatase OCA1 (OCA1).